The following is a 241-amino-acid chain: Small ribosomal subunit protein uS2 (241 aa).

The protein belongs to the universal ribosomal protein uS2 family.

This is Small ribosomal subunit protein uS2 from Klebsiella pneumoniae subsp. pneumoniae (strain ATCC 700721 / MGH 78578).